Here is a 264-residue protein sequence, read N- to C-terminus: Thymidylate synthase (264 aa).

R21 contributes to the dUMP binding site. H51 provides a ligand contact to (6R)-5,10-methylene-5,6,7,8-tetrahydrofolate. DUMP is bound at residue 126 to 127 (RR). C146 (nucleophile) is an active-site residue. DUMP-binding positions include 166–169 (RSCD), N177, and 207–209 (HLY). Residue D169 coordinates (6R)-5,10-methylene-5,6,7,8-tetrahydrofolate. (6R)-5,10-methylene-5,6,7,8-tetrahydrofolate is bound at residue S263.

This sequence belongs to the thymidylate synthase family. Bacterial-type ThyA subfamily. Homodimer.

The protein resides in the cytoplasm. The catalysed reaction is dUMP + (6R)-5,10-methylene-5,6,7,8-tetrahydrofolate = 7,8-dihydrofolate + dTMP. It functions in the pathway pyrimidine metabolism; dTTP biosynthesis. Functionally, catalyzes the reductive methylation of 2'-deoxyuridine-5'-monophosphate (dUMP) to 2'-deoxythymidine-5'-monophosphate (dTMP) while utilizing 5,10-methylenetetrahydrofolate (mTHF) as the methyl donor and reductant in the reaction, yielding dihydrofolate (DHF) as a by-product. This enzymatic reaction provides an intracellular de novo source of dTMP, an essential precursor for DNA biosynthesis. This Buchnera aphidicola subsp. Schizaphis graminum (strain Sg) protein is Thymidylate synthase.